Reading from the N-terminus, the 1879-residue chain is Protein TIC 214 (1879 aa).

The next 6 helical transmembrane spans lie at 18 to 38 (IINS…FSIG), 64 to 84 (FITG…HLAL), 87 to 107 (PYTI…WTNP), 124 to 144 (LSIQ…HFIL), 172 to 192 (VGWL…LVWI), and 218 to 238 (IAPI…GRIP). 2 disordered regions span residues 245–305 (ETSK…IDET) and 586–702 (ISTS…DEPM). 2 stretches are compositionally biased toward acidic residues: residues 253-268 (AETE…EIET) and 295-305 (EKEDPDKIDET). Residues 586–688 (ISTSTPTSTP…SIPASTSTST (103 aa)) are compositionally biased toward low complexity. Positions 691–701 (IKSKDEPKDEP) are enriched in basic and acidic residues.

Belongs to the TIC214 family. In terms of assembly, part of the Tic complex.

It localises to the plastid. Its subcellular location is the chloroplast inner membrane. Involved in protein precursor import into chloroplasts. May be part of an intermediate translocation complex acting as a protein-conducting channel at the inner envelope. This is Protein TIC 214 from Cucumis sativus (Cucumber).